The chain runs to 419 residues: Esterase FrsA (419 aa).

It belongs to the FrsA family.

The catalysed reaction is a carboxylic ester + H2O = an alcohol + a carboxylate + H(+). Functionally, catalyzes the hydrolysis of esters. This is Esterase FrsA from Photobacterium profundum (strain SS9).